The following is a 201-amino-acid chain: Mediator of RNA polymerase II transcription subunit 22 (201 aa).

Residues 93 to 123 adopt a coiled-coil conformation; the sequence is SVNEAIDQRNQQLRALQEECDRKLIALRDEV. The segment at 166 to 201 is disordered; sequence LSAPLLASPEPSAGGPLQAAAPTHSHAGGPGPTEHA.

Component of the Mediator complex, which is composed of MED1, MED4, MED6, MED7, MED8, MED9, MED10, MED11, MED12, MED13, MED13L, MED14, MED15, MED16, MED17, MED18, MED19, MED20, MED21, MED22, MED23, MED24, MED25, MED26, MED27, MED29, MED30, MED31, CCNC, CDK8 and CDC2L6/CDK11. The MED12, MED13, CCNC and CDK8 subunits form a distinct module termed the CDK8 module. Mediator containing the CDK8 module is less active than Mediator lacking this module in supporting transcriptional activation. Individual preparations of the Mediator complex lacking one or more distinct subunits have been variously termed ARC, CRSP, DRIP, PC2, SMCC and TRAP.

The protein localises to the nucleus. Its function is as follows. Component of the Mediator complex, a coactivator involved in the regulated transcription of nearly all RNA polymerase II-dependent genes. Mediator functions as a bridge to convey information from gene-specific regulatory proteins to the basal RNA polymerase II transcription machinery. Mediator is recruited to promoters by direct interactions with regulatory proteins and serves as a scaffold for the assembly of a functional preinitiation complex with RNA polymerase II and the general transcription factors. This chain is Mediator of RNA polymerase II transcription subunit 22 (MED22), found in Bos taurus (Bovine).